The sequence spans 240 residues: Cell division control protein 14 (240 aa).

Interacts with sid1.

It is found in the cytoplasm. The protein resides in the cytoskeleton. The protein localises to the microtubule organizing center. Its subcellular location is the spindle pole body. Has a role in the septation initiation network (SIN) required for cytokinesis. The sequence is that of Cell division control protein 14 (cdc14) from Schizosaccharomyces pombe (strain 972 / ATCC 24843) (Fission yeast).